The following is a 768-amino-acid chain: Protein transport protein Sec23A (768 aa).

T2 carries the N-acetylthreonine modification. Zn(2+)-binding residues include C61, C66, C85, and C88. Phosphothreonine is present on T308. The stretch at 632-718 (PEPVLLDSSS…EHGGSQARFL (87 aa)) is one Gelsolin-like repeat.

It belongs to the SEC23/SEC24 family. SEC23 subfamily. COPII is composed of at least five proteins: the Sec23/24 complex, the Sec13/31 complex and Sar1. Interacts with SEC23IP. Interacts with HTR4. Interacts with SEC16A. Interacts with SLC6A4. Interacts (as part of the Sec23/24 complex) with SEC22B; recruits SEC22B into COPII-coated vesicles and allows the transport of this cargo from the endoplasmic reticulum to the Golgi. Interacts (via Gelsolin-like repeat) with MIA2 and MIA3; specifically involved in the transport of large cargos like the collagen COL7A1. Interacts with DDHD1. Interacts with TMEM39A. Interacts with SACM1L; this interaction is reduced in the absence of TMEM39A. Interacts with kinase FAM20C; transport of FAM20C from the endoplasmic reticulum to the Golgi is likely to be mediated by COPII vesicles.

The protein resides in the cytoplasmic vesicle. It is found in the COPII-coated vesicle membrane. Its subcellular location is the endoplasmic reticulum membrane. The protein localises to the cytoplasm. It localises to the cytosol. Component of the coat protein complex II (COPII) which promotes the formation of transport vesicles from the endoplasmic reticulum (ER). The coat has two main functions, the physical deformation of the endoplasmic reticulum membrane into vesicles and the selection of cargo molecules for their transport to the Golgi complex. Required for the translocation of insulin-induced glucose transporter SLC2A4/GLUT4 to the cell membrane. The sequence is that of Protein transport protein Sec23A from Bos taurus (Bovine).